A 390-amino-acid chain; its full sequence is 1-deoxy-D-xylulose 5-phosphate reductoisomerase (390 aa).

Residues Thr10, Gly11, Ser12, Ile13, Gly36, Arg37, Asn38, and Asn121 each coordinate NADPH. Position 122 (Lys122) interacts with 1-deoxy-D-xylulose 5-phosphate. Residue Glu123 participates in NADPH binding. Asp147 contributes to the Mn(2+) binding site. Ser148, Glu149, Ser173, and His196 together coordinate 1-deoxy-D-xylulose 5-phosphate. Glu149 lines the Mn(2+) pocket. Gly202 contributes to the NADPH binding site. 4 residues coordinate 1-deoxy-D-xylulose 5-phosphate: Ser209, Asn214, Lys215, and Glu218. Glu218 lines the Mn(2+) pocket. A disordered region spans residues Ala367–Arg390. Basic and acidic residues predominate over residues Glu370–Val380.

Belongs to the DXR family. Requires Mg(2+) as cofactor. The cofactor is Mn(2+).

It catalyses the reaction 2-C-methyl-D-erythritol 4-phosphate + NADP(+) = 1-deoxy-D-xylulose 5-phosphate + NADPH + H(+). Its pathway is isoprenoid biosynthesis; isopentenyl diphosphate biosynthesis via DXP pathway; isopentenyl diphosphate from 1-deoxy-D-xylulose 5-phosphate: step 1/6. Catalyzes the NADPH-dependent rearrangement and reduction of 1-deoxy-D-xylulose-5-phosphate (DXP) to 2-C-methyl-D-erythritol 4-phosphate (MEP). In Anaeromyxobacter sp. (strain K), this protein is 1-deoxy-D-xylulose 5-phosphate reductoisomerase.